The primary structure comprises 317 residues: Polysulfide reductase chain C (317 aa).

8 helical membrane passes run 20–40, 54–75, 98–118, 147–167, 182–202, 221–237, 259–279, and 289–309; these read IAVY…AIII, IIKA…LLIF, LGVL…LGVF, IVTF…LSAM, FLAS…LLFF, VILF…VGMY, LFWL…NVAL, and FVML…FYIL.

This sequence belongs to the NrfD family. In terms of assembly, functional polysulfide reductase is made up of three different (A, B, and C) subunits.

It localises to the cell inner membrane. Functionally, could possibly serve as the membrane anchor of the enzyme. Its function is as follows. Component of the phosphorylative electron transport system with polysulfide as the terminal acceptor. The sequence is that of Polysulfide reductase chain C (psrC) from Wolinella succinogenes (strain ATCC 29543 / DSM 1740 / CCUG 13145 / JCM 31913 / LMG 7466 / NCTC 11488 / FDC 602W) (Vibrio succinogenes).